Consider the following 102-residue polypeptide: uncharacterized protein (102 aa).

Positions M1 to T21 are disordered. Residue N16 is glycosylated (N-linked (GlcNAc...) asparagine). A helical transmembrane segment spans residues N24–T44. The tract at residues I49–G102 is disordered. Over residues V56 to N73 the composition is skewed to basic and acidic residues. A glycan (N-linked (GlcNAc...) asparagine) is linked at N90. Residues E93–G102 are compositionally biased toward polar residues.

The protein resides in the membrane. This is an uncharacterized protein from Encephalitozoon cuniculi (strain GB-M1) (Microsporidian parasite).